We begin with the raw amino-acid sequence, 89 residues long: uncharacterized protein (89 aa).

3 helical membrane passes run 9–29 (ICNF…LHSI), 35–55 (ISLS…YIYL), and 65–85 (ILFA…FGTS).

It is found in the membrane. This is an uncharacterized protein from Schizosaccharomyces pombe (strain 972 / ATCC 24843) (Fission yeast).